A 95-amino-acid polypeptide reads, in one-letter code: MSYTIAAQVRTEIGKGSSRRLRHADKVPAVIYGPGKEPVAIVFDHKDIINIQENEDFYTSTLTINLDGSDVKVSVKAMQRHAFKPLIEHVDFTYA.

It belongs to the bacterial ribosomal protein bL25 family. As to quaternary structure, part of the 50S ribosomal subunit; part of the 5S rRNA/L5/L18/L25 subcomplex. Contacts the 5S rRNA. Binds to the 5S rRNA independently of L5 and L18.

This is one of the proteins that binds to the 5S RNA in the ribosome where it forms part of the central protuberance. The polypeptide is Large ribosomal subunit protein bL25 (Shewanella woodyi (strain ATCC 51908 / MS32)).